A 156-amino-acid chain; its full sequence is Interleukin-36 receptor antagonist protein (156 aa).

C9 and C155 form a disulfide bridge.

The protein belongs to the IL-1 family. In terms of assembly, interacts with cargo receptor TMED10; the interaction mediates the translocation from the cytoplasm into the ERGIC (endoplasmic reticulum-Golgi intermediate compartment) and thereby secretion. In terms of processing, removal of N-terminal methionine is necessary for full antagonistic activity. Highly abundant in embryonic tissue and tissues containing epithelial cells.

Its subcellular location is the cytoplasm. The protein localises to the secreted. Functionally, inhibits the activity of interleukin-36 (IL36A,IL36B and IL36G) by binding to receptor IL1RL2/IL-36R and preventing its association with the coreceptor IL1RAP for signaling. Part of the IL-36 signaling system that is thought to be present in epithelial barriers and to take part in local inflammatory response; similar to the IL-1 system with which it shares the coreceptor. Proposed to play a role in skin inflammation. May be involved in the innate immune response to fungal pathogens. May activate an anti-inflammatory signaling pathway by recruiting SIGIRR. In Mus musculus (Mouse), this protein is Interleukin-36 receptor antagonist protein.